A 488-amino-acid chain; its full sequence is UDP-N-acetylmuramoyl-L-alanyl-D-glutamate--2,6-diaminopimelate ligase (488 aa).

UDP-N-acetyl-alpha-D-muramoyl-L-alanyl-D-glutamate contacts are provided by residues leucine 24, serine 26, and 41-43 (HQV). 113-119 (GTNGKTT) provides a ligand contact to ATP. Residues asparagine 154, 155-156 (TT), serine 182, glutamine 188, and arginine 190 contribute to the UDP-N-acetyl-alpha-D-muramoyl-L-alanyl-D-glutamate site. N6-carboxylysine is present on lysine 222. Meso-2,6-diaminopimelate-binding positions include arginine 386, 410–413 (DNPR), glycine 461, and glutamate 465. The short motif at 410-413 (DNPR) is the Meso-diaminopimelate recognition motif element.

This sequence belongs to the MurCDEF family. MurE subfamily. Requires Mg(2+) as cofactor. Post-translationally, carboxylation is probably crucial for Mg(2+) binding and, consequently, for the gamma-phosphate positioning of ATP.

The protein localises to the cytoplasm. It carries out the reaction UDP-N-acetyl-alpha-D-muramoyl-L-alanyl-D-glutamate + meso-2,6-diaminopimelate + ATP = UDP-N-acetyl-alpha-D-muramoyl-L-alanyl-gamma-D-glutamyl-meso-2,6-diaminopimelate + ADP + phosphate + H(+). Its pathway is cell wall biogenesis; peptidoglycan biosynthesis. Its function is as follows. Catalyzes the addition of meso-diaminopimelic acid to the nucleotide precursor UDP-N-acetylmuramoyl-L-alanyl-D-glutamate (UMAG) in the biosynthesis of bacterial cell-wall peptidoglycan. This Haemophilus influenzae (strain PittGG) protein is UDP-N-acetylmuramoyl-L-alanyl-D-glutamate--2,6-diaminopimelate ligase.